A 305-amino-acid chain; its full sequence is Superkiller complex protein 8 (305 aa).

M1 carries the N-acetylmethionine modification. Position 2 is an N-acetylthreonine; in WD repeat-containing protein 61, N-terminally processed (T2). WD repeat units follow at residues 14–57 (AHDD…LELQ), 62–101 (GHQL…QMKS), 104–143 (AGPV…KEYS), 146–187 (TRGK…HTLE), 188–227 (GHAM…LAGT), 230–269 (GHAS…CIHT), and 272–305 (DHQD…DCPI).

Belongs to the SKI8 family. In terms of assembly, component of the PAF1 complex, which consists of CDC73, PAF1, LEO1, CTR9, RTF1 and SKIC8. The PAF1 complex interacts with PHF5A. Within the PAF1 complex interacts directly with PHF5A. Component of the SKI complex which consists of SKIC2, SKIC3 and SKIC8.

The protein resides in the nucleus. The protein localises to the cytoplasm. In terms of biological role, component of the PAF1 complex (PAF1C) which has multiple functions during transcription by RNA polymerase II and is implicated in regulation of development and maintenance of embryonic stem cell pluripotency. PAF1C associates with RNA polymerase II through interaction with POLR2A CTD non-phosphorylated and 'Ser-2'- and 'Ser-5'-phosphorylated forms and is involved in transcriptional elongation, acting both independently and synergistically with TCEA1 and in cooperation with the DSIF complex and HTATSF1. PAF1C is required for transcription of Hox and Wnt target genes. PAF1C is involved in hematopoiesis and stimulates transcriptional activity of KMT2A/MLL1; it promotes leukemogenesis through association with KMT2A/MLL1-rearranged oncoproteins, such as KMT2A/MLL1-MLLT3/AF9 and KMT2A/MLL1-MLLT1/ENL. PAF1C is involved in histone modifications such as ubiquitination of histone H2B and methylation on histone H3 'Lys-4' (H3K4me3). PAF1C recruits the RNF20/40 E3 ubiquitin-protein ligase complex and the E2 enzyme UBE2A or UBE2B to chromatin which mediate monoubiquitination of 'Lys-120' of histone H2B (H2BK120ub1); UB2A/B-mediated H2B ubiquitination is proposed to be coupled to transcription. PAF1C is involved in mRNA 3' end formation probably through association with cleavage and poly(A) factors. In case of infection by influenza A strain H3N2, PAF1C associates with viral NS1 protein, thereby regulating gene transcription. Required for mono- and trimethylation on histone H3 'Lys-4' (H3K4me3), dimethylation on histone H3 'Lys-79' (H3K4me3). Required for Hox gene transcription. Also acts as a component of the SKI complex, a multiprotein complex that assists the RNA-degrading exosome during the mRNA decay and quality-control pathways. The SKI complex catalyzes mRNA extraction from 80S ribosomal complexes in the 3'-5' direction and channels mRNA to the cytosolic exosome for degradation. SKI-mediated extraction of mRNA from stalled ribosomes allow binding of the Pelota-HBS1L complex and subsequent ribosome disassembly by ABCE1 for ribosome recycling. In Mus musculus (Mouse), this protein is Superkiller complex protein 8 (Skic8).